The following is a 337-amino-acid chain: Nucleotide sugar transporter SLC35D2 (337 aa).

The Cytoplasmic portion of the chain corresponds to 1-27 (MTAGGQAEAEGAGGEPGAARLPSRVAR). Residues 28 to 48 (LLSALFYGTCSFLIVLVNKAL) traverse the membrane as a helical segment. The Extracellular segment spans residues 49–53 (LTTYG). The helical transmembrane segment at 54 to 74 (FPSPIFLGIGQMAATIMILYV) threads the bilayer. Residues 75-146 (SKLNKIIHFP…IILGKQYSLN (72 aa)) lie on the Cytoplasmic side of the membrane. 2 helical membrane passes run 147–167 (IILSVFAIILGAFIAAGSDLA) and 168–188 (FNLEGYIFVFLNDIFTAANGV). The Cytoplasmic segment spans residues 189 to 201 (YTKQKMDPKELGK). The chain crosses the membrane as a helical span at residues 202-222 (YGVLFYNACFMIIPTLIISVS). The Extracellular portion of the chain corresponds to 223-237 (TGDLQQATEFNQWKN). A helical membrane pass occupies residues 238–258 (VVFILQFLLSCFLGFLLMYST). Topologically, residues 259–265 (VLCSYYN) are cytoplasmic. Residues 266–288 (SALTTAVVGAIKNVSVAYIGILI) form a helical membrane-spanning segment. Over 289 to 292 (GGDY) the chain is Extracellular. The chain crosses the membrane as a helical span at residues 293–315 (IFSLLNFVGLNICMAGGLRYSFL). The Cytoplasmic segment spans residues 316 to 337 (TLSSQLKPKPVGEENICLDLKS).

This sequence belongs to the TPT transporter family. SLC35D subfamily. As to expression, highly expressed in heart, kidney, small intestine, placenta, lung and peripheral blood leukocyte. Weakly expressed in skeletal muscle and spleen. Not expressed in brain, colon and thymus.

The protein localises to the golgi apparatus membrane. It carries out the reaction UMP(out) + UDP-N-acetyl-alpha-D-glucosamine(in) = UMP(in) + UDP-N-acetyl-alpha-D-glucosamine(out). The enzyme catalyses UMP(out) + UDP-alpha-D-glucose(in) = UMP(in) + UDP-alpha-D-glucose(out). In terms of biological role, nucleotide sugar antiporter transporting UDP-N-acetylglucosamine (UDP-GlcNAc) and UDP-glucose (UDP-Glc) from the cytosol into the lumen of the Golgi in exchange of UMP. By supplying UDP-N-acetylglucosamine, a donor substrate to heparan sulfate synthases, probably takes part in the synthesis of these glycoconjugates. This is Nucleotide sugar transporter SLC35D2 from Homo sapiens (Human).